We begin with the raw amino-acid sequence, 129 residues long: Small ribosomal subunit protein uS11 (129 aa).

This sequence belongs to the universal ribosomal protein uS11 family. Part of the 30S ribosomal subunit. Interacts with proteins S7 and S18. Binds to IF-3.

Functionally, located on the platform of the 30S subunit, it bridges several disparate RNA helices of the 16S rRNA. Forms part of the Shine-Dalgarno cleft in the 70S ribosome. The chain is Small ribosomal subunit protein uS11 from Methylobacterium sp. (strain 4-46).